A 335-amino-acid chain; its full sequence is Aspartate carbamoyltransferase catalytic subunit (335 aa).

Positions 81 and 82 each coordinate carbamoyl phosphate. K109 is an L-aspartate binding site. Carbamoyl phosphate-binding residues include R131, H159, and Q162. Residues R192 and R246 each coordinate L-aspartate. The carbamoyl phosphate site is built by G287 and P288.

This sequence belongs to the aspartate/ornithine carbamoyltransferase superfamily. ATCase family. In terms of assembly, heterododecamer (2C3:3R2) of six catalytic PyrB chains organized as two trimers (C3), and six regulatory PyrI chains organized as three dimers (R2).

The enzyme catalyses carbamoyl phosphate + L-aspartate = N-carbamoyl-L-aspartate + phosphate + H(+). Its pathway is pyrimidine metabolism; UMP biosynthesis via de novo pathway; (S)-dihydroorotate from bicarbonate: step 2/3. Functionally, catalyzes the condensation of carbamoyl phosphate and aspartate to form carbamoyl aspartate and inorganic phosphate, the committed step in the de novo pyrimidine nucleotide biosynthesis pathway. The chain is Aspartate carbamoyltransferase catalytic subunit from Caulobacter sp. (strain K31).